The following is a 405-amino-acid chain: DNA primase DnaG (405 aa).

One can recognise a Toprim domain in the interval 172 to 248; sequence DSIIVVEGRA…HIDYIARAPP (77 aa). The Mg(2+) site is built by Glu-178, Asp-222, and Asp-224. Residues 279-302 form a disordered region; that stretch reads AAGEKTESQMSPQQPQLTQTQPTT. A compositionally biased stretch (low complexity) spans 290-302; it reads PQQPQLTQTQPTT.

The protein belongs to the archaeal DnaG primase family. As to quaternary structure, forms a ternary complex with MCM helicase and DNA. Component of the archaeal exosome complex. Requires Mg(2+) as cofactor.

The catalysed reaction is ssDNA + n NTP = ssDNA/pppN(pN)n-1 hybrid + (n-1) diphosphate.. Its function is as follows. RNA polymerase that catalyzes the synthesis of short RNA molecules used as primers for DNA polymerase during DNA replication. Also part of the exosome, which is a complex involved in RNA degradation. Acts as a poly(A)-binding protein that enhances the interaction between heteromeric, adenine-rich transcripts and the exosome. This Pyrobaculum islandicum (strain DSM 4184 / JCM 9189 / GEO3) protein is DNA primase DnaG.